Consider the following 190-residue polypeptide: Elongation factor P-like protein (190 aa).

Belongs to the elongation factor P family.

This chain is Elongation factor P-like protein, found in Marinomonas sp. (strain MWYL1).